Consider the following 387-residue polypeptide: MRTLRRLKFMSSPSLSDLGKREPGAAGADERGTQQRRACANATWNSIHNGVIAVFQRKGLPDQELFILNEGVRQLLKTELGSFFTEYLQNQLLTKGMVILRDKIRFYEGQKLLDSLAETWDFFFSDVLPTLQAIFYPVQGKEPSVRQLALLHFRNTITLSVKLEDALARSHACVPPAIAQMLLVLQGVHESRGVTEDYLRLETLIQKVVSPYLGTYGLYSNEGPCTHSCILEKRFLRRSRSGDILAKNPVVRSKSYNTPLLNPVAEHEAEGTASGGTSIRRHSVSEMTSCPEPQGFVDTPDQGPSGTFRSSPSPHSGPCPSRLYPPAHSPEQGPDHGSPPTSSPETLVDQILESVDSDSEGIFIDFGRGSRSSVSDFEAAGGRPSVV.

Interaction with RICTOR stretches follow at residues 10–96 (MSSP…LTKG) and 189–219 (HESRGVTEDYLRLETLIQKVVSPYLGTYGLY). A disordered region spans residues 11–33 (SSPSLSDLGKREPGAAGADERGT). A compositionally biased stretch (basic and acidic residues) spans 18–33 (LGKREPGAAGADERGT). S253 carries the phosphoserine modification. Disordered regions lie at residues 262 to 347 (NPVA…PETL) and 365 to 387 (DFGRGSRSSVSDFEAAGGRPSVV). Positions 310–321 (SSPSPHSGPCPS) are enriched in low complexity. S373 carries the phosphoserine modification.

This sequence belongs to the PROTOR family. Associated component of the mechanistic target of rapamycin complex 2 (mTORC2). Binds directly to MTOR and RICTOR within the TORC2 complex.

In terms of biological role, associated subunit of mTORC2, which regulates cell growth and survival in response to hormonal signals. mTORC2 is activated by growth factors, but, in contrast to mTORC1, seems to be nutrient-insensitive. mTORC2 seems to function upstream of Rho GTPases to regulate the actin cytoskeleton, probably by activating one or more Rho-type guanine nucleotide exchange factors. PRR5 plays an important role in regulation of PDGFRB expression and in modulation of platelet-derived growth factor signaling. May act as a tumor suppressor in breast cancer. The chain is Proline-rich protein 5 from Rattus norvegicus (Rat).